A 350-amino-acid polypeptide reads, in one-letter code: UDP-3-O-acylglucosamine N-acyltransferase (350 aa).

Histidine 244 functions as the Proton acceptor in the catalytic mechanism.

It belongs to the transferase hexapeptide repeat family. LpxD subfamily. In terms of assembly, homotrimer.

It carries out the reaction a UDP-3-O-[(3R)-3-hydroxyacyl]-alpha-D-glucosamine + a (3R)-hydroxyacyl-[ACP] = a UDP-2-N,3-O-bis[(3R)-3-hydroxyacyl]-alpha-D-glucosamine + holo-[ACP] + H(+). It participates in bacterial outer membrane biogenesis; LPS lipid A biosynthesis. Its function is as follows. Catalyzes the N-acylation of UDP-3-O-acylglucosamine using 3-hydroxyacyl-ACP as the acyl donor. Is involved in the biosynthesis of lipid A, a phosphorylated glycolipid that anchors the lipopolysaccharide to the outer membrane of the cell. This is UDP-3-O-acylglucosamine N-acyltransferase from Janthinobacterium sp. (strain Marseille) (Minibacterium massiliensis).